The sequence spans 155 residues: Putative pre-16S rRNA nuclease (155 aa).

This sequence belongs to the YqgF nuclease family.

It is found in the cytoplasm. Functionally, could be a nuclease involved in processing of the 5'-end of pre-16S rRNA. In Corynebacterium jeikeium (strain K411), this protein is Putative pre-16S rRNA nuclease.